A 496-amino-acid polypeptide reads, in one-letter code: Glycylpeptide N-tetradecanoyltransferase 1 (496 aa).

Residues 1–82 are disordered; sequence MADESETAVK…SAQDQPVKMN (82 aa). S31 and S47 each carry phosphoserine. Basic residues predominate over residues 55-66; sequence KKKKKKQKKKKE. S83 is subject to Phosphoserine. Q118, F119, W120, F247, L248, C249, V250, S256, R258, V259, and A260 together coordinate tetradecanoyl-CoA.

It belongs to the NMT family.

The protein localises to the cytoplasm. Its subcellular location is the cytosol. The protein resides in the membrane. The enzyme catalyses N-terminal glycyl-[protein] + tetradecanoyl-CoA = N-tetradecanoylglycyl-[protein] + CoA + H(+). It carries out the reaction N-terminal glycyl-L-lysyl-[protein] + tetradecanoyl-CoA = N-terminal glycyl-(N(6)-tetradecanoyl)-L-lysyl-[protein] + CoA + H(+). Its function is as follows. Adds a myristoyl group to the N-terminal glycine residue of certain cellular and viral proteins. Also able to mediate N-terminal lysine myristoylation of proteins: catalyzes myristoylation of ARF6 on both 'Gly-2' and 'Lys-3'. Lysine myristoylation is required to maintain ARF6 on membranes during the GTPase cycle. This chain is Glycylpeptide N-tetradecanoyltransferase 1 (NMT1), found in Pongo abelii (Sumatran orangutan).